We begin with the raw amino-acid sequence, 546 residues long: Membrane protein insertase YidC (546 aa).

The chain crosses the membrane as a helical span at residues 6–26; it reads LILFIVFSFSLLLLWEAWQDK. Residues 31–56 form a disordered region; it reads PATRPVAGAPAGSAAPTPSTALNAPA. The segment covering 37 to 56 has biased composition (low complexity); the sequence is AGAPAGSAAPTPSTALNAPA. 4 helical membrane-spanning segments follow: residues 351-371, 425-445, 465-482, and 494-514; these read LVGN…LALY, LPIL…LAAV, WYIL…QVKL, and IMMI…AGLV.

Belongs to the OXA1/ALB3/YidC family. Type 1 subfamily. As to quaternary structure, interacts with the Sec translocase complex via SecD. Specifically interacts with transmembrane segments of nascent integral membrane proteins during membrane integration.

The protein localises to the cell inner membrane. In terms of biological role, required for the insertion and/or proper folding and/or complex formation of integral membrane proteins into the membrane. Involved in integration of membrane proteins that insert both dependently and independently of the Sec translocase complex, as well as at least some lipoproteins. Aids folding of multispanning membrane proteins. This chain is Membrane protein insertase YidC, found in Thiobacillus denitrificans (strain ATCC 25259 / T1).